The chain runs to 338 residues: Anthranilate phosphoribosyltransferase (338 aa).

5-phospho-alpha-D-ribose 1-diphosphate is bound by residues Gly81, 84-85 (GD), Thr89, 91-94 (NIST), 109-117 (KHGNRAVSS), and Ser121. Gly81 contacts anthranilate. Ser93 is a binding site for Mg(2+). Asn112 contributes to the anthranilate binding site. Arg167 contributes to the anthranilate binding site. Residues Asp226 and Glu227 each contribute to the Mg(2+) site.

Belongs to the anthranilate phosphoribosyltransferase family. Homodimer. Requires Mg(2+) as cofactor.

It carries out the reaction N-(5-phospho-beta-D-ribosyl)anthranilate + diphosphate = 5-phospho-alpha-D-ribose 1-diphosphate + anthranilate. It functions in the pathway amino-acid biosynthesis; L-tryptophan biosynthesis; L-tryptophan from chorismate: step 2/5. Its function is as follows. Catalyzes the transfer of the phosphoribosyl group of 5-phosphorylribose-1-pyrophosphate (PRPP) to anthranilate to yield N-(5'-phosphoribosyl)-anthranilate (PRA). This Myxococcus xanthus (strain DK1622) protein is Anthranilate phosphoribosyltransferase.